We begin with the raw amino-acid sequence, 187 residues long: uncharacterized protein (187 aa).

Residues 8–28 traverse the membrane as a helical segment; that stretch reads ITFFIILLICLICILLLLVVF. A disordered region spans residues 99–153; it reads PLENRRDMEAEEENQINEKQEPENAGETGQEEDDGLQKIHTSVTRTPSVVESQKR. Polar residues predominate over residues 137-149; the sequence is IHTSVTRTPSVVE.

It is found in the membrane. This is an uncharacterized protein from Homo sapiens (Human).